The following is a 601-amino-acid chain: Oligoendopeptidase F homolog (601 aa).

Position 387 (His387) interacts with Zn(2+). Glu388 is a catalytic residue. His391 and His394 together coordinate Zn(2+).

The protein belongs to the peptidase M3 family. Requires Zn(2+) as cofactor.

Functionally, hydrolyzes peptides containing between 7 and 17 amino acids with a rather wide specificity. This chain is Oligoendopeptidase F homolog (pepF), found in Lactococcus lactis subsp. lactis (strain IL1403) (Streptococcus lactis).